Here is a 318-residue protein sequence, read N- to C-terminus: Potassium channel subfamily K member 15 (318 aa).

Residues 1–8 (MRKQSART) lie on the Cytoplasmic side of the membrane. The chain crosses the membrane as a helical span at residues 9-29 (AALILCILSYLLVGAAVFDAL). An intramembrane region (pore-forming) is located at residues 80–101 (FAGSFYFAITVITTIGYGHAAP). A helical membrane pass occupies residues 108 to 128 (VFCMFYALLGIPLTLVTFQSL). Residues 129–158 (GERLNALVRCLLLAAKRCLGLRRPHVSAEN) lie on the Cytoplasmic side of the membrane. Residues 159 to 179 (MVVAGLLLCAATLALGAAAFA) form a helical membrane-spanning segment. The segment at residues 189–209 (AYYYCFITLTTIGFGDFVALQ) is an intramembrane region (pore-forming). The chain crosses the membrane as a helical span at residues 223–243 (FSFLYILLGLTVIGAFLNLVV). Residues 244–318 (LRFLASAEAP…DRLRARRKSI (75 aa)) are Cytoplasmic-facing. A disordered region spans residues 296 to 318 (LSPEAVHDCHSSPDRLRARRKSI). Over residues 300–311 (AVHDCHSSPDRL) the composition is skewed to basic and acidic residues.

The protein belongs to the two pore domain potassium channel (TC 1.A.1.8) family. As to quaternary structure, heterodimer. Phosphorylated. In terms of tissue distribution, brain-specific. Highly expressed in auditory nuclei, in Purkinje cells and in olfactory bulb mitral cells.

It localises to the membrane. Functionally, probable potassium channel subunit. No channel activity observed in heterologous systems. May need to associate with another protein to form a functional channel. The protein is Potassium channel subfamily K member 15 (Kcnk15) of Rattus norvegicus (Rat).